A 142-amino-acid chain; its full sequence is Large ribosomal subunit protein uL11 (142 aa).

It belongs to the universal ribosomal protein uL11 family. Part of the ribosomal stalk of the 50S ribosomal subunit. Interacts with L10 and the large rRNA to form the base of the stalk. L10 forms an elongated spine to which L12 dimers bind in a sequential fashion forming a multimeric L10(L12)X complex. One or more lysine residues are methylated.

Functionally, forms part of the ribosomal stalk which helps the ribosome interact with GTP-bound translation factors. This Acidithiobacillus ferrooxidans (strain ATCC 23270 / DSM 14882 / CIP 104768 / NCIMB 8455) (Ferrobacillus ferrooxidans (strain ATCC 23270)) protein is Large ribosomal subunit protein uL11.